Here is a 1365-residue protein sequence, read N- to C-terminus: ATP-dependent RNA helicase DHX29 (1365 aa).

Basic residues predominate over residues 1–10 (MGGKNKKHKA). 3 disordered regions span residues 1-74 (MGGK…NDSG), 174-222 (SQEF…EETT), and 235-257 (AEQQ…EKFD). 2 stretches are compositionally biased toward low complexity: residues 11–36 (PGAA…VGEA) and 43–53 (ARPAPAVPTGA). Phosphoserine occurs at positions 69, 190, and 198. Over residues 187–203 (KFQSVQIQATLSPPQQT) the composition is skewed to polar residues. Residues 206-222 (KRQEEDPKIKPKKEETT) are compositionally biased toward basic and acidic residues. Positions 281 to 308 (LEKNKQGQKEAQEKIRKFQREMETLEDH) form a coiled coil. The segment at 500 to 524 (QQQQQQQQRPESEKGGSEDPEESWE) is disordered. The Helicase ATP-binding domain maps to 581–754 (VETLKRHRVV…FTHCPILRIS (174 aa)). Residue 594 to 601 (GETGSGKS) coordinates ATP. A DEAH box motif is present at residues 701 to 704 (DEVH). One can recognise a Helicase C-terminal domain in the interval 848-1025 (LILELLVYLD…ELCLHIMKCD (178 aa)).

Belongs to the DEAD box helicase family. DEAH subfamily. Part of the 43S pre-initiation complex (PIC) that contains at least Met-tRNA, EIF1, EIF1A (EIF1AX or EIF1AY), EIF2S1, EIF2S2, EIF2S3, EIF3A, EIF3B, EIF3C, EIF3D, EIF3E, EIF3F, EIF3G, EIF3H, EIF3I, EIF3J, EIF3K, EIF3L, EIF3M, DHX29 and the 40S ribosomal subunit.

The protein localises to the cytoplasm. The catalysed reaction is ATP + H2O = ADP + phosphate + H(+). In terms of biological role, ATP-binding RNA helicase involved in translation initiation. Part of the 43S pre-initiation complex that is required for efficient initiation on mRNAs of higher eukaryotes with structured 5'-UTRs by promoting efficient NTPase-dependent 48S complex formation. Specifically binds to the 40S ribosome near the mRNA entrance. Does not possess a processive helicase activity. This Mus musculus (Mouse) protein is ATP-dependent RNA helicase DHX29.